Reading from the N-terminus, the 347-residue chain is Methionine import ATP-binding protein MetN (347 aa).

One can recognise an ABC transporter domain in the interval 2–247; it reads ITTTGLTKVY…PGSELASALF (246 aa). 38–45 is an ATP binding site; sequence GQSGAGKS.

It belongs to the ABC transporter superfamily. Methionine importer (TC 3.A.1.24) family. In terms of assembly, the complex is composed of two ATP-binding proteins (MetN), two transmembrane proteins (MetI) and a solute-binding protein (MetQ).

The protein resides in the cell membrane. The catalysed reaction is L-methionine(out) + ATP + H2O = L-methionine(in) + ADP + phosphate + H(+). It carries out the reaction D-methionine(out) + ATP + H2O = D-methionine(in) + ADP + phosphate + H(+). Its function is as follows. Part of the ABC transporter complex MetNIQ involved in methionine import. Responsible for energy coupling to the transport system. The polypeptide is Methionine import ATP-binding protein MetN (Streptomyces avermitilis (strain ATCC 31267 / DSM 46492 / JCM 5070 / NBRC 14893 / NCIMB 12804 / NRRL 8165 / MA-4680)).